Consider the following 172-residue polypeptide: Ribosome maturation factor RimM (172 aa).

Residues 96–168 (EGEFYYHQII…RVDVELMEGL (73 aa)) enclose the PRC barrel domain.

Belongs to the RimM family. Binds ribosomal protein uS19.

It localises to the cytoplasm. Its function is as follows. An accessory protein needed during the final step in the assembly of 30S ribosomal subunit, possibly for assembly of the head region. Essential for efficient processing of 16S rRNA. May be needed both before and after RbfA during the maturation of 16S rRNA. It has affinity for free ribosomal 30S subunits but not for 70S ribosomes. The protein is Ribosome maturation factor RimM of Streptococcus pyogenes serotype M3 (strain ATCC BAA-595 / MGAS315).